Here is an 89-residue protein sequence, read N- to C-terminus: U1-hexatoxin-Iw1e (89 aa).

The signal sequence occupies residues 1 to 18; that stretch reads MLKFVVLIFVVIMASTFA. Cystine bridges form between cysteine 21-cysteine 32, cysteine 26-cysteine 40, cysteine 31-cysteine 66, cysteine 50-cysteine 74, and cysteine 68-cysteine 81. A propeptide spanning residues 87–89 is cleaved from the precursor; the sequence is RSE.

The protein belongs to the MIT-like AcTx family. In terms of tissue distribution, expressed by the venom gland.

It is found in the secreted. This is U1-hexatoxin-Iw1e from Illawarra wisharti (Illawarra funnel-web spider).